Here is a 331-residue protein sequence, read N- to C-terminus: Tryptophan--tRNA ligase 1 (331 aa).

ATP-binding positions include 9–11 and 17–18; these read KPT and GN. The 'HIGH' region signature appears at 10–18; that stretch reads PTGHLTLGN. Residue aspartate 137 participates in L-tryptophan binding. Residues 149–151, valine 188, and 197–201 each bind ATP; these read GDD and KMGKS. Residues 197–201 carry the 'KMSKS' region motif; that stretch reads KMGKS.

It belongs to the class-I aminoacyl-tRNA synthetase family. In terms of assembly, homodimer.

It is found in the cytoplasm. The catalysed reaction is tRNA(Trp) + L-tryptophan + ATP = L-tryptophyl-tRNA(Trp) + AMP + diphosphate + H(+). Functionally, catalyzes the attachment of tryptophan to tRNA(Trp). This chain is Tryptophan--tRNA ligase 1, found in Streptomyces avermitilis (strain ATCC 31267 / DSM 46492 / JCM 5070 / NBRC 14893 / NCIMB 12804 / NRRL 8165 / MA-4680).